Reading from the N-terminus, the 137-residue chain is Nucleoside diphosphate kinase (137 aa).

Residues K9, F57, R85, T91, R102, and N112 each coordinate ATP. H115 serves as the catalytic Pros-phosphohistidine intermediate.

Belongs to the NDK family. In terms of assembly, homotetramer. Mg(2+) serves as cofactor.

The protein localises to the cytoplasm. The enzyme catalyses a 2'-deoxyribonucleoside 5'-diphosphate + ATP = a 2'-deoxyribonucleoside 5'-triphosphate + ADP. The catalysed reaction is a ribonucleoside 5'-diphosphate + ATP = a ribonucleoside 5'-triphosphate + ADP. Functionally, major role in the synthesis of nucleoside triphosphates other than ATP. The ATP gamma phosphate is transferred to the NDP beta phosphate via a ping-pong mechanism, using a phosphorylated active-site intermediate. In Thermus thermophilus (strain ATCC BAA-163 / DSM 7039 / HB27), this protein is Nucleoside diphosphate kinase.